The sequence spans 92 residues: Sperm-specific protein Phi-1 (92 aa).

The tract at residues 1–92 is disordered; that stretch reads MPSPTRRSSK…RVRAKKKKKK (92 aa). 2 stretches are compositionally biased toward basic residues: residues 7–19 and 29–92; these read RSSK…RSRS and AAKR…KKKK.

Sperm.

The protein resides in the nucleus. The protein localises to the chromosome. Its function is as follows. Involved in nuclear basic protein transition: histones are replaced by spermatid specific proteins which are themselves replaced by protamines in late spermatids. The chain is Sperm-specific protein Phi-1 from Mytilus edulis (Blue mussel).